We begin with the raw amino-acid sequence, 375 residues long: Alcohol dehydrogenase 1A (375 aa).

Gly1 bears the N-acetylglycine mark. Zn(2+)-binding residues include Cys46, His67, Cys97, Cys100, Cys103, Cys111, and Cys174. NAD(+) contacts are provided by residues 199 to 204 (GLGGVG), Asp223, Lys228, 293 to 295 (VGL), and Arg370.

Belongs to the zinc-containing alcohol dehydrogenase family. Class-I subfamily. Multimeric (with different ratios of monomers). Zn(2+) is required as a cofactor.

It is found in the cytoplasm. The enzyme catalyses a primary alcohol + NAD(+) = an aldehyde + NADH + H(+). The catalysed reaction is a secondary alcohol + NAD(+) = a ketone + NADH + H(+). In Saara hardwickii (Indian spiny-tailed lizard), this protein is Alcohol dehydrogenase 1A.